We begin with the raw amino-acid sequence, 119 residues long: Platelet basic protein (119 aa).

Positions 1 to 33 are cleaved as a signal peptide; the sequence is MSLRLGAISSCTTSSPFPVLQVLLPLSLLLTTL. Residues 34-39 constitute a propeptide that is removed on maturation; the sequence is VPATMG. 2 disulfides stabilise this stretch: Cys-54–Cys-80 and Cys-56–Cys-96.

It is found in the secreted. Functionally, chemoattractant factor for neutrophils. The chain is Platelet basic protein (PPBP) from Sus scrofa (Pig).